The following is a 162-amino-acid chain: Globin CTT-VI (162 aa).

The first 15 residues, 1 to 15 (MKFLVLALCIAAASA), serve as a signal peptide directing secretion. A Globin domain is found at 17 to 161 (VLTTEQADLV…TYAMLFSAMD (145 aa)). Heme b contacts are provided by H75 and H110.

Belongs to the globin family. Homodimer.

The chain is Globin CTT-VI (CTT-6) from Chironomus thummi thummi (Midge).